The chain runs to 314 residues: Olfactory receptor 5P51 (314 aa).

At 1-28 (MAFLEDGNHTAVTEFVLFGLTDDPVLRV) the chain is on the extracellular side. N-linked (GlcNAc...) asparagine glycosylation occurs at Asn-8. A helical transmembrane segment spans residues 29-49 (ILFIIFLCIYLVNVSGNLSTI). Residues 50–57 (LLIRVSSQ) are Cytoplasmic-facing. The helical transmembrane segment at 58-78 (LHHPMYFFLSHLASVDVGYSS) threads the bilayer. At 79–102 (TVTPKMLANFLLERSTISYLGCTI) the chain is on the extracellular side. An intrachain disulfide couples Cys-100 to Cys-192. A helical transmembrane segment spans residues 103–123 (QLFSGAFVGTLECFLLATMAY). Topologically, residues 124–136 (DRFIAICNPLLYS) are cytoplasmic. A helical membrane pass occupies residues 137 to 157 (TKMSTQVCIQLLVGSYIGGFL). Residues 158-199 (NASSFLLSFFPLLFCGPNRVNHYSCDLTPLIELSCSGSNVPI) lie on the Extracellular side of the membrane. A helical membrane pass occupies residues 200-220 (VPASFCSAFVIIVTVSVIAIS). Residues 221-240 (YTYILITILKMRSTEGRQKA) lie on the Cytoplasmic side of the membrane. Residues 241–261 (FSTCTSHLTAVTLYYGTVTFI) form a helical membrane-spanning segment. Over 262 to 274 (YVMPKSSYSTDQN) the chain is Extracellular. A helical membrane pass occupies residues 275-295 (KVVSVFYTVVIPMLNPIIYSL). At 296 to 314 (RNNEIKGALKRQLARKIFS) the chain is on the cytoplasmic side.

This sequence belongs to the G-protein coupled receptor 1 family.

It is found in the cell membrane. Potential odorant receptor. The polypeptide is Olfactory receptor 5P51 (Mus musculus (Mouse)).